We begin with the raw amino-acid sequence, 680 residues long: Methionine--tRNA ligase (680 aa).

Positions 15–25 (PYANGPVHIGH) match the 'HIGH' region motif. Residues cysteine 147, cysteine 150, cysteine 160, and cysteine 163 each coordinate Zn(2+). Residues 332-336 (KISTS) carry the 'KMSKS' region motif. Position 335 (threonine 335) interacts with ATP. In terms of domain architecture, tRNA-binding spans 578 to 680 (EFEKLDIRVG…REVKPGSEVK (103 aa)).

It belongs to the class-I aminoacyl-tRNA synthetase family. MetG type 1 subfamily. Homodimer. Zn(2+) is required as a cofactor.

It is found in the cytoplasm. The enzyme catalyses tRNA(Met) + L-methionine + ATP = L-methionyl-tRNA(Met) + AMP + diphosphate. Is required not only for elongation of protein synthesis but also for the initiation of all mRNA translation through initiator tRNA(fMet) aminoacylation. This chain is Methionine--tRNA ligase, found in Phocaeicola vulgatus (strain ATCC 8482 / DSM 1447 / JCM 5826 / CCUG 4940 / NBRC 14291 / NCTC 11154) (Bacteroides vulgatus).